Here is a 297-residue protein sequence, read N- to C-terminus: Probable GTP 3',8-cyclase (297 aa).

Residues 4 to 220 (EFGREIRSFR…VVTRKFMQNR (217 aa)) form the Radical SAM core domain. Arg13 lines the GTP pocket. [4Fe-4S] cluster contacts are provided by Cys20 and Cys24. Tyr26 serves as a coordination point for S-adenosyl-L-methionine. Cys27 contributes to the [4Fe-4S] cluster binding site. Residue Lys61 participates in GTP binding. Gly65 contributes to the S-adenosyl-L-methionine binding site. GTP is bound at residue Thr91. Residue Ser115 participates in S-adenosyl-L-methionine binding. Residue Lys151 participates in GTP binding. [4Fe-4S] cluster contacts are provided by Cys242 and Cys245. 247-249 (RIR) lines the GTP pocket. Residue Cys259 participates in [4Fe-4S] cluster binding.

This sequence belongs to the radical SAM superfamily. MoaA family. [4Fe-4S] cluster is required as a cofactor.

The enzyme catalyses GTP + AH2 + S-adenosyl-L-methionine = (8S)-3',8-cyclo-7,8-dihydroguanosine 5'-triphosphate + 5'-deoxyadenosine + L-methionine + A + H(+). It participates in cofactor biosynthesis; molybdopterin biosynthesis. In terms of biological role, catalyzes the cyclization of GTP to (8S)-3',8-cyclo-7,8-dihydroguanosine 5'-triphosphate. This is Probable GTP 3',8-cyclase from Methanococcus vannielii (strain ATCC 35089 / DSM 1224 / JCM 13029 / OCM 148 / SB).